The chain runs to 957 residues: PE-PGRS family protein PE_PGRS3 (957 aa).

The 91-residue stretch at 4–94 folds into the PE domain; it reads VIAAPEVIAA…GAYAAAEAAA (91 aa). Residues 893–925 show a composition bias toward basic residues; it reads CRRQRRADRQRRQRRQRRQSRGHARCRRHRRAA. Positions 893 to 957 are disordered; it reads CRRQRRADRQ…GISCSPQMMP (65 aa).

The protein belongs to the mycobacterial PE family. PGRS subfamily. Post-translationally, a cleavage of the protein removes the N-terminal 120-150 residues, immediately upstream the PGRS domain. The exact position of the cleavage site could not be identified.

It localises to the cell outer membrane. Its subcellular location is the secreted. The protein localises to the cell wall. The protein resides in the cell surface. In terms of biological role, the arginine-rich C-terminal region protrudes from the mycobacterial membrane and mediates M.tuberculosis entry into host epithelial cells. May serve as a bridge between mycobacteria and host cells by interacting with specific host phospholipids and extracting them from host cells, for their direct integration or as a source of phosphate, during phases of TB pathogenesis when M.tuberculosis is short of phosphate supply. This chain is PE-PGRS family protein PE_PGRS3, found in Mycobacterium tuberculosis (strain ATCC 25618 / H37Rv).